Here is a 45-residue protein sequence, read N- to C-terminus: Putative potassium channel blocker (45 aa).

Expressed by the venom gland.

The protein localises to the secreted. In terms of biological role, inhibits potassium channels. The polypeptide is Putative potassium channel blocker (Hottentotta tamulus (Eastern Indian scorpion)).